Reading from the N-terminus, the 236-residue chain is V-set and transmembrane domain-containing protein 1 (236 aa).

A signal peptide spans 1–16; sequence MTAEFLSLLCLGLCLG. Residues 17–135 lie on the Extracellular side of the membrane; it reads YEDEKKNEKP…APSMKTDTRT (119 aa). The 88-residue stretch at 27–114 folds into the Ig-like V-type domain; that stretch reads PKPSLHAWPS…EWSESSEHLQ (88 aa). N-linked (GlcNAc...) asparagine glycans are attached at residues N44 and N55. The cysteines at positions 49 and 96 are disulfide-linked. Residues 136–156 form a helical membrane-spanning segment; the sequence is IFVAIFSCISILLLFLSVFII. Topologically, residues 157 to 236 are cytoplasmic; the sequence is YRCSQHSSSS…GSHEYAALKV (80 aa). Positions 166 to 200 are disordered; that stretch reads SEESTKRTSHSKLPEQEAAEADLSNMERVSLSTAD. 2 short sequence motifs (ITIM motif) span residues 204–209 and 229–234; these read VTYAEL and HEYAAL. Residues 215–236 form a disordered region; it reads SEAASDTTQEPPGSHEYAALKV.

Post-translationally, isoform 2 is N-glycosylated. In terms of tissue distribution, expressed on myeloid (neutrophils, eosinophils and monocytes) but not on lymphoid cells.

It localises to the membrane. The protein localises to the secreted. In terms of biological role, behaves as a cytokine, promoting IL17A secretion by CD4+ T-cells, and differentiation and activation of IL17 producing helper T-cells (TH17). Functionally, inhibitory immune receptor involved in the regulation of phagocytes. The sequence is that of V-set and transmembrane domain-containing protein 1 (VSTM1) from Homo sapiens (Human).